We begin with the raw amino-acid sequence, 95 residues long: Acylphosphatase (95 aa).

Residues 7-95 (RLTAWVLGTV…PKGEVGFRTR (89 aa)) form the Acylphosphatase-like domain. Catalysis depends on residues Arg-22 and Asn-40.

Belongs to the acylphosphatase family.

The enzyme catalyses an acyl phosphate + H2O = a carboxylate + phosphate + H(+). The sequence is that of Acylphosphatase (acyP) from Corynebacterium diphtheriae (strain ATCC 700971 / NCTC 13129 / Biotype gravis).